We begin with the raw amino-acid sequence, 1501 residues long: Ribulose bisphosphate carboxylase (1501 aa).

N111 contacts substrate. K166 serves as the catalytic Proton acceptor. Residue K168 participates in substrate binding. Positions 191, 193, and 194 each coordinate Mg(2+). The residue at position 191 (K191) is an N6-carboxylysine. H287 (proton acceptor) is an active-site residue. 3 residues coordinate substrate: R288, H321, and S368. Positions 486–508 (SAAAFVGASVAPAKKENVVARQA) are cleaved as a propeptide — linker. N619 provides a ligand contact to substrate. Catalysis depends on K674, which acts as the Proton acceptor. K676 is a substrate binding site. The Mg(2+) site is built by K699, D701, and E702. An N6-carboxylysine modification is found at K699. H795 functions as the Proton acceptor in the catalytic mechanism. Positions 796, 829, and 876 each coordinate substrate. A propeptide spans 994 to 1016 (SAAAFVGASVAPAKKENVVARQA) (linker). N1127 lines the substrate pocket. The Proton acceptor role is filled by K1182. K1184 provides a ligand contact to substrate. Residues K1207, D1209, and E1210 each contribute to the Mg(2+) site. At K1207 the chain carries N6-carboxylysine. Residue H1303 is the Proton acceptor of the active site. Substrate-binding residues include R1304, H1337, and S1384.

This sequence belongs to the RuBisCO large chain family. Type II subfamily. Homodimer. It depends on Mg(2+) as a cofactor.

It localises to the plastid. Its subcellular location is the chloroplast. It carries out the reaction 2 (2R)-3-phosphoglycerate + 2 H(+) = D-ribulose 1,5-bisphosphate + CO2 + H2O. It catalyses the reaction D-ribulose 1,5-bisphosphate + O2 = 2-phosphoglycolate + (2R)-3-phosphoglycerate + 2 H(+). Functionally, ruBisCO catalyzes two reactions: the carboxylation of D-ribulose 1,5-bisphosphate, the primary event in carbon dioxide fixation, as well as the oxidative fragmentation of the pentose substrate. Both reactions occur simultaneously and in competition at the same active site. The sequence is that of Ribulose bisphosphate carboxylase (rbcL) from Symbiodinium sp. (Dinoflagellate).